The primary structure comprises 792 residues: MDTRVELELEPVGKQDRLKDQPDDENEPLENQLELEQEHKSLLTPVKIPPAQTASPDQEATPSTPPPMSLQPGTSRQLFRDAAMAHGGQETTSLLQQELNNIAATQTPASKLRSASSTLDASISRNPSTTGGKHEKKLGHRRVAEGGEVTYKKIQSKQIMGSIQLGIQHTVGSLASKPKRDLLMNDFWEMETISFPPDGSSITPAHHYNDFRFKVYAPIAFRYFRDLFGIAPDDFLMSMCASPLRELSNPGASGSIFYLTTDDEFIIKTVQKKECEFLQKLLPGYYMNLSQNPRTLLPKFFGLYCFHYNSKNVRLVAMNNLLPSDIKMHCKYDLKGSSFRRKASKAERQKASPTFKDLDFAEHHPNGIFLETDKYNALMSTIKRDCMVLESFQIMDYSLLVGIHNLDLAAKEKREERILNARAKLQRKESAAQGPPSLNPDDDAPEADQNQLQAVASYASIPGTSAGAALNRTRSMNRQRLVAHSTALESITADMDVPLEEDEDVPAGGIPARSENDERLILYIGIIDILQSYRLEKKLEHTFKSILYNGDTVSVCRPSFYAKRFQDAMGKQVFKKTPTFPLKHSPSKRKTSTTQLRSPASRLPPLSTPTNAVRQPIMTMSGMSTPPPAFDDISEEDITAASTSSLQQQRSSNQSNNNRGETEVALREGNNTRGGSGEPSSTYHTQYSYDSSGRTGSALTSDYSDDESTGTDLSSRLPKLRTHRLTKTSVQVTTVGYVEGVDTPPKGGQDVVHADVNGKTTMTTTTMLTTTKTAHIQAPSYTSTLVLNDLPR.

Basic and acidic residues predominate over residues 1–21; that stretch reads MDTRVELELEPVGKQDRLKDQ. Disordered regions lie at residues 1 to 74, 105 to 139, 423 to 446, 577 to 612, and 640 to 714; these read MDTR…QPGT, TQTP…KKLG, AKLQ…DAPE, TPTF…PTNA, and AAST…TDLS. Composition is skewed to polar residues over residues 52-62 and 105-131; these read QTASPDQEATP and TQTP…STTG. Positions 155–573 constitute a PIPK domain; sequence QSKQIMGSIQ…RFQDAMGKQV (419 aa). Low complexity predominate over residues 642-658; it reads STSSLQQQRSSNQSNNN. Positions 678–702 are enriched in polar residues; the sequence is EPSSTYHTQYSYDSSGRTGSALTSD.

In terms of assembly, interacts with ash2 (via B30.2/SPRY domain); the interaction is direct and seems to be specific for ash2 isoform B.

It is found in the cytoplasm. Its subcellular location is the cell cortex. The protein localises to the nucleus. It localises to the chromosome. The protein resides in the apical cell membrane. It is found in the cell projection. Its subcellular location is the cilium. The protein localises to the flagellum membrane. It catalyses the reaction a 1,2-diacyl-sn-glycero-3-phospho-(1D-myo-inositol 4-phosphate) + ATP = a 1,2-diacyl-sn-glycero-3-phospho-(1D-myo-inositol-4,5-bisphosphate) + ADP + H(+). In terms of biological role, catalyzes the phosphorylation of phosphatidylinositol 4-phosphate (PtdIns[4]P) to form phosphatidylinositol 4,5-bisphosphate (PtdIns[4,5]P(2)), a lipid second messenger that regulates several cellular processes such as signal transduction, vesicle trafficking, actin cytoskeleton dynamics, cell adhesion, and cell motility. PtdIns[4,5]P(2) can directly act as a second messenger or can be utilized as a precursor to generate other second messengers: inositol 1,4,5-trisphosphate (IP3), diacylglycerol (DAG) or phosphatidylinositol-3,4,5-trisphosphate (PtdIns[3,4,5]P(3)). Required for germline development during oogenesis. Sktl is the major phosphatidylinositol 4-phosphate 5-kinase responsible for enrichment of PtdIns[4,5]P(2) in the apical plasma membrane of the oocyte and follicular epithelium cells of the egg chamber during oogenesis. Involved in nuclear anchoring and microtubule organization required for targeted mRNA transport during maintenance of oocyte polarity. The PtdIns[4,5]P(2) produced by sktl is required for maintenance of cellular polarity, prevention of the epithelial-mesenchymal transition process, maintenance of adherens junctions and regulation of apical constriction, probably by affecting polarized cortical recruitment of PAR proteins and their effectors, including baz/bazooka, aPKC, par-1 and l(2)gl. Involved in actin cytoskeleton organization probably through PtdIns[4,5]P(2)-mediated regulation of Moe/Moesin phosphorylation. Involved in PtdIns[4,5]P(2)-mediated apical recruitment of the formin dia/diaphanous in tubular epithelial cells. Involved in anterodorsal cell morphogenesis and eggshell dorsal appendage formation, probably through regulation of apical constriction by PtdIns[4,5]P(2) during tubulogenesis. Required for cell viability or proliferation during wing and eye imaginal disk development. May be involved in cytoskeletal regulation during sensory bristle development. Together with mys/integrin beta localizes to the trailing edge of larval epidermal cells in a JNK signaling-dependent manner during wound healing and is required for setting up cell polarity and re-epithelialization. Required for polarization of elongating spermatid cysts possibly by generation of PtdIns[4,5]P(2) involved in mediating membrane association and orientation of the nucleus-basal body pair. Probably involved in PtdIns[4,5]P(2)-mediated recruitment of exocyst proteins that may mediate membrane addition during spermatid elongation. Involved in maintenance of specialised cell contacts known as slit diaphragms required for nephrocyte morphogenesis and function. Regulates nephrocyte endocytosis, possibly through PtdIns[4,5]P(2)-mediated recruitment of effector proteins. Not required for nervous system development or neurotransmitter release at the neuromuscular junction. Together with ash2 probably plays a role in maintenance of transcriptionally active chromatin through down-regulation of histone H1 hyperphosphorylation. The polypeptide is Phosphatidylinositol 4-phosphate 5-kinase type-1 sktl (Drosophila melanogaster (Fruit fly)).